A 122-amino-acid polypeptide reads, in one-letter code: Large ribosomal subunit protein uL14 (122 aa).

This sequence belongs to the universal ribosomal protein uL14 family. Part of the 50S ribosomal subunit. Forms a cluster with proteins L3 and L19. In the 70S ribosome, L14 and L19 interact and together make contacts with the 16S rRNA in bridges B5 and B8.

Its function is as follows. Binds to 23S rRNA. Forms part of two intersubunit bridges in the 70S ribosome. The sequence is that of Large ribosomal subunit protein uL14 from Acinetobacter baumannii (strain AB307-0294).